The following is a 184-amino-acid chain: Ras-related protein Rap-1b-like protein (184 aa).

10–18 (GSRGVGKSA) contacts GTP. The Effector region signature appears at 32 to 40 (YDPTIEDSY). GTP-binding positions include 57-61 (DTAGT), 116-119 (NKCD), and 147-149 (SAK). The S-geranylgeranyl cysteine moiety is linked to residue cysteine 181. Positions 182–184 (QLL) are cleaved as a propeptide — removed in mature form.

The protein belongs to the small GTPase superfamily. Ras family.

The protein localises to the cell membrane. Its subcellular location is the cytoplasm. It localises to the cytosol. The enzyme catalyses GTP + H2O = GDP + phosphate + H(+). Its function is as follows. Probable GTP-binding protein with intrinsic GTPase activity. The polypeptide is Ras-related protein Rap-1b-like protein (Homo sapiens (Human)).